We begin with the raw amino-acid sequence, 163 residues long: Putative pre-16S rRNA nuclease (163 aa).

The protein belongs to the YqgF nuclease family.

The protein localises to the cytoplasm. Its function is as follows. Could be a nuclease involved in processing of the 5'-end of pre-16S rRNA. The sequence is that of Putative pre-16S rRNA nuclease from Rhizobium leguminosarum bv. trifolii (strain WSM2304).